A 327-amino-acid chain; its full sequence is Phenylalanine--tRNA ligase alpha subunit (327 aa).

Mg(2+) is bound at residue glutamate 252.

The protein belongs to the class-II aminoacyl-tRNA synthetase family. Phe-tRNA synthetase alpha subunit type 1 subfamily. As to quaternary structure, tetramer of two alpha and two beta subunits. Mg(2+) serves as cofactor.

The protein resides in the cytoplasm. It catalyses the reaction tRNA(Phe) + L-phenylalanine + ATP = L-phenylalanyl-tRNA(Phe) + AMP + diphosphate + H(+). The polypeptide is Phenylalanine--tRNA ligase alpha subunit (Aeromonas hydrophila subsp. hydrophila (strain ATCC 7966 / DSM 30187 / BCRC 13018 / CCUG 14551 / JCM 1027 / KCTC 2358 / NCIMB 9240 / NCTC 8049)).